A 276-amino-acid chain; its full sequence is Ribosomal RNA small subunit methyltransferase A (276 aa).

Residues Asn27, Leu29, Gly54, Glu75, Asp101, and Asn123 each contribute to the S-adenosyl-L-methionine site.

It belongs to the class I-like SAM-binding methyltransferase superfamily. rRNA adenine N(6)-methyltransferase family. RsmA subfamily.

The protein localises to the cytoplasm. It carries out the reaction adenosine(1518)/adenosine(1519) in 16S rRNA + 4 S-adenosyl-L-methionine = N(6)-dimethyladenosine(1518)/N(6)-dimethyladenosine(1519) in 16S rRNA + 4 S-adenosyl-L-homocysteine + 4 H(+). Specifically dimethylates two adjacent adenosines (A1518 and A1519) in the loop of a conserved hairpin near the 3'-end of 16S rRNA in the 30S particle. May play a critical role in biogenesis of 30S subunits. This chain is Ribosomal RNA small subunit methyltransferase A, found in Bartonella bacilliformis (strain ATCC 35685 / KC583 / Herrer 020/F12,63).